Reading from the N-terminus, the 110-residue chain is UPF0122 protein SaurJH9_1295 (110 aa).

Belongs to the UPF0122 family.

Its function is as follows. Might take part in the signal recognition particle (SRP) pathway. This is inferred from the conservation of its genetic proximity to ftsY/ffh. May be a regulatory protein. The chain is UPF0122 protein SaurJH9_1295 from Staphylococcus aureus (strain JH9).